Reading from the N-terminus, the 152-residue chain is Endoribonuclease YbeY (152 aa).

Histidine 114, histidine 118, and histidine 124 together coordinate Zn(2+).

The protein belongs to the endoribonuclease YbeY family. Zn(2+) serves as cofactor.

The protein localises to the cytoplasm. Its function is as follows. Single strand-specific metallo-endoribonuclease involved in late-stage 70S ribosome quality control and in maturation of the 3' terminus of the 16S rRNA. The chain is Endoribonuclease YbeY from Coxiella burnetii (strain CbuK_Q154) (Coxiella burnetii (strain Q154)).